The primary structure comprises 247 residues: Pyridoxine 5'-phosphate synthase (247 aa).

Asn-12 provides a ligand contact to 3-amino-2-oxopropyl phosphate. Asp-14–His-15 is a 1-deoxy-D-xylulose 5-phosphate binding site. Arg-23 is a 3-amino-2-oxopropyl phosphate binding site. His-48 functions as the Proton acceptor in the catalytic mechanism. 1-deoxy-D-xylulose 5-phosphate-binding residues include Arg-50 and His-55. Glu-75 functions as the Proton acceptor in the catalytic mechanism. Thr-105 is a 1-deoxy-D-xylulose 5-phosphate binding site. His-196 functions as the Proton donor in the catalytic mechanism. Residues Gly-197 and Gly-218 to His-219 contribute to the 3-amino-2-oxopropyl phosphate site.

The protein belongs to the PNP synthase family. Homooctamer; tetramer of dimers.

It localises to the cytoplasm. The enzyme catalyses 3-amino-2-oxopropyl phosphate + 1-deoxy-D-xylulose 5-phosphate = pyridoxine 5'-phosphate + phosphate + 2 H2O + H(+). It participates in cofactor biosynthesis; pyridoxine 5'-phosphate biosynthesis; pyridoxine 5'-phosphate from D-erythrose 4-phosphate: step 5/5. In terms of biological role, catalyzes the complicated ring closure reaction between the two acyclic compounds 1-deoxy-D-xylulose-5-phosphate (DXP) and 3-amino-2-oxopropyl phosphate (1-amino-acetone-3-phosphate or AAP) to form pyridoxine 5'-phosphate (PNP) and inorganic phosphate. The protein is Pyridoxine 5'-phosphate synthase of Pseudomonas fluorescens (strain Pf0-1).